The following is a 954-amino-acid chain: MMDTKVDQTIQPKFYVDKKLSKSFDNKLDEDIFNYPFKKESFLKSEKFSFEHTKDSLWKCIKEKAKKKSDMEYFNCVNNLCCKFICTIRKYVKYFLYLKDSSYEIYNINLYNNNNMNIINNKNITNNKNITNNINNSFSNDYINYNHNYNHLNNSSSSKHNNYNVNNIDEKNIKNDYNTYHNIYEQIFFKYNPSFYEYLMFTLMKKLIHYKNYIFNKTKKINNSYNNNDIKNIDGFLIFQNINFEEIFLNTFYSSFPFKLFLHSLYMIFICFIYFVVLYFMLLKKIYTHPFIFHLSVLKFLFDIIFFLSFILYPLFLRLKRIDKIIYSSYISSYIFVCVTFLYSFIIFKCSSYSVKMNSNTYQNNFVFQNMLFLLINIIYICIFCFLKNYMILYSFLYNCRFSIFCILFIFLYYYLFFSLDFYRIIHLPLDNFFFPFLCFLFFSFLFIFKIIMSLYYEYVYEKKYRILFVKKNNLIEKRITKRKNTNINNAYFTKYFSIDNTIPTSPIEDILNNFKHILETINIIEENPNHNLTTNIMKIKEKIKNCDNILRTKNINQVQIGKYRKFEKVYNIWCLDKMYLNYPLNQEETKSFLSNSLNRISFNSFSNMHSLLSSKFQEHYNDIYDWNGNIENIYKANTFISIGYKLLYPLGVLEANFDKEKLKKFLFRICSYYNDIPYHTSLHAAQVAHFSKSMLFMLDMNHKISAIDEFCLHISSLCHDTGHPGLNNYFLINSENNLALTYNDNSVLENYHCSLLFKTLKNPNYNIFEHYPYHIFISCKKNIIKAILSTDMKNHFEYISDFRTSKEFIDYDNLSNDQIWQIFCLILKASDIGHSTLEWNKHLEWTLKINEEFYLQGLLEKSLNIQNSFLCDINTMNKLALSQIDFLKHLCIPLFNELNYICKNNDVYTHCIQPIENNIERWESHKNDNQNLGLHEKYKEENLLSKLELIKFE.

Over 1–259 (MMDTKVDQTI…NTFYSSFPFK (259 aa)) the chain is Cytoplasmic. Residues 260-280 (LFLHSLYMIFICFIYFVVLYF) traverse the membrane as a helical segment. Residues 281 to 296 (MLLKKIYTHPFIFHLS) lie on the Extracellular side of the membrane. A helical membrane pass occupies residues 297–317 (VLKFLFDIIFFLSFILYPLFL). Over 318-327 (RLKRIDKIIY) the chain is Cytoplasmic. Residues 328-348 (SSYISSYIFVCVTFLYSFIIF) traverse the membrane as a helical segment. Residues 349–365 (KCSSYSVKMNSNTYQNN) are Extracellular-facing. Residues 366–386 (FVFQNMLFLLINIIYICIFCF) form a helical membrane-spanning segment. Topologically, residues 387-401 (LKNYMILYSFLYNCR) are cytoplasmic. Residues 402 to 422 (FSIFCILFIFLYYYLFFSLDF) form a helical membrane-spanning segment. The Extracellular segment spans residues 423 to 432 (YRIIHLPLDN). A helical transmembrane segment spans residues 433-453 (FFFPFLCFLFFSFLFIFKIIM). Residues 454 to 954 (SLYYEYVYEK…LSKLELIKFE (501 aa)) are Cytoplasmic-facing. A PDEase domain is found at 586-930 (NQEETKSFLS…ERWESHKNDN (345 aa)). H680 (proton donor) is an active-site residue. A 3',5'-cyclic GMP-binding site is contributed by 680–684 (HTSLH). Residues H684, H720, D721, and D832 each contribute to the Zn(2+) site. Residues D721, D832, and Q884 each coordinate 3',5'-cyclic GMP. Mg(2+) is bound at residue D721.

This sequence belongs to the cyclic nucleotide phosphodiesterase family. The cofactor is Zn(2+). Mg(2+) serves as cofactor.

Its subcellular location is the membrane. It carries out the reaction 3',5'-cyclic GMP + H2O = GMP + H(+). The protein operates within purine metabolism; 3',5'-cyclic GMP degradation; GMP from 3',5'-cyclic GMP: step 1/1. Not inhibited by cAMP. Inhibited by zaprinast. Functionally, specifically hydrolyzes the second messenger cGMP, which is a key regulator of many important physiological processes. This chain is cGMP-specific 3',5'-cyclic phosphodiesterase alpha, found in Plasmodium falciparum (isolate 3D7).